A 139-amino-acid polypeptide reads, in one-letter code: ATP synthase epsilon chain (139 aa).

It belongs to the ATPase epsilon chain family. As to quaternary structure, F-type ATPases have 2 components, CF(1) - the catalytic core - and CF(0) - the membrane proton channel. CF(1) has five subunits: alpha(3), beta(3), gamma(1), delta(1), epsilon(1). CF(0) has three main subunits: a, b and c.

The protein localises to the cell membrane. In terms of biological role, produces ATP from ADP in the presence of a proton gradient across the membrane. This chain is ATP synthase epsilon chain, found in Pediococcus pentosaceus (strain ATCC 25745 / CCUG 21536 / LMG 10740 / 183-1w).